The following is a 207-amino-acid chain: Small ribosomal subunit protein uS4 (207 aa).

The interval 31–53 (KAKFDSKPGQHGRTSGARTSDFG) is disordered. The 61-residue stretch at 97–157 (SRLDNVVYRM…EKSKKQARIV (61 aa)) folds into the S4 RNA-binding domain.

It belongs to the universal ribosomal protein uS4 family. In terms of assembly, part of the 30S ribosomal subunit. Contacts protein S5. The interaction surface between S4 and S5 is involved in control of translational fidelity.

In terms of biological role, one of the primary rRNA binding proteins, it binds directly to 16S rRNA where it nucleates assembly of the body of the 30S subunit. With S5 and S12 plays an important role in translational accuracy. The protein is Small ribosomal subunit protein uS4 of Paracidovorax citrulli (strain AAC00-1) (Acidovorax citrulli).